The sequence spans 186 residues: Acireductone dioxygenase (186 aa).

Fe(2+) is bound by residues H103, H105, E109, and H147. 4 residues coordinate Ni(2+): H103, H105, E109, and H147.

It belongs to the acireductone dioxygenase (ARD) family. As to quaternary structure, monomer. Fe(2+) is required as a cofactor. Requires Ni(2+) as cofactor.

It catalyses the reaction 1,2-dihydroxy-5-(methylsulfanyl)pent-1-en-3-one + O2 = 3-(methylsulfanyl)propanoate + CO + formate + 2 H(+). The catalysed reaction is 1,2-dihydroxy-5-(methylsulfanyl)pent-1-en-3-one + O2 = 4-methylsulfanyl-2-oxobutanoate + formate + 2 H(+). Its pathway is amino-acid biosynthesis; L-methionine biosynthesis via salvage pathway; L-methionine from S-methyl-5-thio-alpha-D-ribose 1-phosphate: step 5/6. In terms of biological role, catalyzes 2 different reactions between oxygen and the acireductone 1,2-dihydroxy-3-keto-5-methylthiopentene (DHK-MTPene) depending upon the metal bound in the active site. Fe-containing acireductone dioxygenase (Fe-ARD) produces formate and 2-keto-4-methylthiobutyrate (KMTB), the alpha-ketoacid precursor of methionine in the methionine recycle pathway. Ni-containing acireductone dioxygenase (Ni-ARD) produces methylthiopropionate, carbon monoxide and formate, and does not lie on the methionine recycle pathway. In Synechococcus sp. (strain CC9605), this protein is Acireductone dioxygenase.